The following is a 275-amino-acid chain: Large ribosomal subunit protein uL2c (275 aa).

The disordered stretch occupies residues 224–275 (AMNPVDHPHGGGEGRTPIGRKKPVTPWGYSALGKKSRKRNRYSDASILRRRE).

This sequence belongs to the universal ribosomal protein uL2 family. Part of the 50S ribosomal subunit.

It localises to the plastid. It is found in the chloroplast. This is Large ribosomal subunit protein uL2c (rpl2) from Picea abies (Norway spruce).